The sequence spans 258 residues: Acyl-[acyl-carrier-protein]--UDP-N-acetylglucosamine O-acyltransferase (258 aa).

This sequence belongs to the transferase hexapeptide repeat family. LpxA subfamily. As to quaternary structure, homotrimer.

The protein localises to the cytoplasm. The enzyme catalyses a (3R)-hydroxyacyl-[ACP] + UDP-N-acetyl-alpha-D-glucosamine = a UDP-3-O-[(3R)-3-hydroxyacyl]-N-acetyl-alpha-D-glucosamine + holo-[ACP]. It functions in the pathway glycolipid biosynthesis; lipid IV(A) biosynthesis; lipid IV(A) from (3R)-3-hydroxytetradecanoyl-[acyl-carrier-protein] and UDP-N-acetyl-alpha-D-glucosamine: step 1/6. Its function is as follows. Involved in the biosynthesis of lipid A, a phosphorylated glycolipid that anchors the lipopolysaccharide to the outer membrane of the cell. In Neisseria meningitidis serogroup C / serotype 2a (strain ATCC 700532 / DSM 15464 / FAM18), this protein is Acyl-[acyl-carrier-protein]--UDP-N-acetylglucosamine O-acyltransferase.